The following is a 132-amino-acid chain: Small ribosomal subunit protein uS9 (132 aa).

Belongs to the universal ribosomal protein uS9 family.

This is Small ribosomal subunit protein uS9 from Mesomycoplasma hyopneumoniae (strain 232) (Mycoplasma hyopneumoniae).